The following is a 130-amino-acid chain: Small ribosomal subunit protein uS9 (130 aa).

It belongs to the universal ribosomal protein uS9 family.

This is Small ribosomal subunit protein uS9 from Magnetococcus marinus (strain ATCC BAA-1437 / JCM 17883 / MC-1).